A 2130-amino-acid chain; its full sequence is Dedicator of cytokinesis protein 7 (2130 aa).

S30 is modified (phosphoserine). Residues 137–175 form a disordered region; that stretch reads GFNPNTLDKQKERQKGLPRQVFESDEAPDGSSYQDEQDD. S180 and S182 each carry phosphoserine. Residues 365 to 395 are a coiled coil; the sequence is FKEADATKNKEKLEKLKSQADQFCQRLGKYR. Residue K381 is modified to N6-methyllysine. A Phosphothreonine modification is found at T450. The residue at position 452 (S452) is a Phosphoserine. Residues 561-727 form the C2 DOCK-type domain; that stretch reads RNLLYIYPQS…GVFNVEVVAV (167 aa). Phosphoserine occurs at positions 862, 864, 882, 888, 896, 900, and 905. The span at 888-901 shows a compositional bias: low complexity; that stretch reads SLNLNRSRSLSNSN. The interval 888 to 966 is disordered; that stretch reads SLNLNRSRSL…SCNRMSSHTE (79 aa). Residues T907 and T909 each carry the phosphothreonine modification. Phosphoserine occurs at positions 910, 929, 963, 1382, 1420, 1422, 1424, and 1428. Residues 942 to 966 show a composition bias toward polar residues; sequence SNPSPSAESTQAMDRSCNRMSSHTE. Positions 1668–2104 constitute a DOCKER domain; that stretch reads KGYQTSPDLR…LQPLINRKIP (437 aa). The residue at position 1952 (K1952) is an N6-acetyllysine. A coiled-coil region spans residues 2076–2102; that stretch reads DQKEYQRELERNYHRLKEALQPLINRK. S2119 is modified (phosphoserine).

Belongs to the DOCK family. As to quaternary structure, component of the DOCK7-induced septin displacement/DISP complex, at least composed of DOCK7, LRCH3 and MYO6. Interacts with TSC1. Interacts with nucleotide-free RAC1 and RAC3. Interacts with TACC3. Interacts with CRY1. Interacts with NOD2.

It localises to the cell projection. Its subcellular location is the axon. Its function is as follows. Functions as a guanine nucleotide exchange factor (GEF), which activates Rac1 and Rac3 Rho small GTPases by exchanging bound GDP for free GTP. Does not have a GEF activity for CDC42. Required for STMN1 'Ser-15' phosphorylation during axon formation and consequently for neuronal polarization. As part of the DISP complex, may regulate the association of septins with actin and thereby regulate the actin cytoskeleton. Has a role in pigmentation. Involved in the regulation of cortical neurogenesis through the control of radial glial cells (RGCs) proliferation versus differentiation; negatively regulates the basal-to-apical interkinetic nuclear migration of RGCs by antagonizing the microtubule growth-promoting function of TACC3. The polypeptide is Dedicator of cytokinesis protein 7 (Dock7) (Mus musculus (Mouse)).